Reading from the N-terminus, the 490-residue chain is Cytochrome P450 2C39 (490 aa).

The first 25 residues, 1-25, serve as a signal peptide directing secretion; it reads MDLVTFLVLTLSSLILLSLWRQSCG. Cys435 serves as a coordination point for heme.

Belongs to the cytochrome P450 family. The cofactor is heme. In terms of tissue distribution, liver.

The protein resides in the endoplasmic reticulum membrane. It localises to the microsome membrane. The enzyme catalyses an organic molecule + reduced [NADPH--hemoprotein reductase] + O2 = an alcohol + oxidized [NADPH--hemoprotein reductase] + H2O + H(+). The catalysed reaction is (5Z,8Z,11Z,14Z)-eicosatetraenoate + reduced [NADPH--hemoprotein reductase] + O2 = 11,12-epoxy-(5Z,8Z,14Z)-eicosatrienoate + oxidized [NADPH--hemoprotein reductase] + H2O + H(+). It carries out the reaction (5Z,8Z,11Z,14Z)-eicosatetraenoate + reduced [NADPH--hemoprotein reductase] + O2 = 14,15-epoxy-(5Z,8Z,11Z)-eicosatrienoate + oxidized [NADPH--hemoprotein reductase] + H2O + H(+). It functions in the pathway lipid metabolism; arachidonate metabolism. In terms of biological role, a cytochrome P450 monooxygenase that primarily catalyzes the epoxidation of 11,12 and 14,15 double bonds of (5Z,8Z,11Z,14Z)-eicosatetraenoic acid (arachidonate) forming 11,12- and 14,15-epoxyeicosatrienoic acids (11,12- and 14,15-EET) regioisomers. Mechanistically, uses molecular oxygen inserting one oxygen atom into a substrate, and reducing the second into a water molecule, with two electrons provided by NADPH via cytochrome P450 reductase (CPR; NADPH--hemoprotein reductase). The chain is Cytochrome P450 2C39 from Mus musculus (Mouse).